The sequence spans 529 residues: UPF0159 protein TC_0921 (529 aa).

ThyX domains lie at 38-274 (KGAL…AEPH) and 309-511 (KGVK…LKFV).

The protein belongs to the UPF0159 family.

The sequence is that of UPF0159 protein TC_0921 from Chlamydia muridarum (strain MoPn / Nigg).